We begin with the raw amino-acid sequence, 284 residues long: Thymidylate synthase (284 aa).

R34 serves as a coordination point for dUMP. H64 lines the (6R)-5,10-methylene-5,6,7,8-tetrahydrofolate pocket. 139–140 (RR) is a dUMP binding site. The active-site Nucleophile is the C159. DUMP contacts are provided by residues 186–189 (RSAD), N197, and 227–229 (HIY). Residue D189 participates in (6R)-5,10-methylene-5,6,7,8-tetrahydrofolate binding. A283 provides a ligand contact to (6R)-5,10-methylene-5,6,7,8-tetrahydrofolate.

This sequence belongs to the thymidylate synthase family. Bacterial-type ThyA subfamily. As to quaternary structure, homodimer.

The protein localises to the cytoplasm. The catalysed reaction is dUMP + (6R)-5,10-methylene-5,6,7,8-tetrahydrofolate = 7,8-dihydrofolate + dTMP. It participates in pyrimidine metabolism; dTTP biosynthesis. In terms of biological role, catalyzes the reductive methylation of 2'-deoxyuridine-5'-monophosphate (dUMP) to 2'-deoxythymidine-5'-monophosphate (dTMP) while utilizing 5,10-methylenetetrahydrofolate (mTHF) as the methyl donor and reductant in the reaction, yielding dihydrofolate (DHF) as a by-product. This enzymatic reaction provides an intracellular de novo source of dTMP, an essential precursor for DNA biosynthesis. The chain is Thymidylate synthase from Polaromonas sp. (strain JS666 / ATCC BAA-500).